The sequence spans 274 residues: Large ribosomal subunit protein uL2 (274 aa).

Residues 223–274 are disordered; that stretch reads VAMNPVDHPHGGGEGKTSGGRHPVSPWGVPTKGYKTRSNKRTDKFIVRRRAK.

Belongs to the universal ribosomal protein uL2 family. Part of the 50S ribosomal subunit. Forms a bridge to the 30S subunit in the 70S ribosome.

One of the primary rRNA binding proteins. Required for association of the 30S and 50S subunits to form the 70S ribosome, for tRNA binding and peptide bond formation. It has been suggested to have peptidyltransferase activity; this is somewhat controversial. Makes several contacts with the 16S rRNA in the 70S ribosome. This chain is Large ribosomal subunit protein uL2, found in Colwellia psychrerythraea (strain 34H / ATCC BAA-681) (Vibrio psychroerythus).